Reading from the N-terminus, the 584-residue chain is ATP-dependent ubiquitin transferase-like protein Cap2 (584 aa).

The segment at 1–137 is E2-like domain; the sequence is MKQELHHTLL…SGTSNDVELE (137 aa). Cysteine 90 (for E2-like domain) is an active-site residue. A linker domain region spans residues 138 to 338; it reads GEFSAYWQSE…LLSRNQSRPD (201 aa). The adenylation plus E1-like domain stretch occupies residues 339–584; sequence VGNLSQKRIA…RFSGCNICDE (246 aa). Catalysis depends on cysteine 522, which acts as the For E1-like domain.

In the C-terminal section; belongs to the HesA/MoeB/ThiF family. As to quaternary structure, interacts with CD-NTase DncV in the presence and absence of phage T2. A Cap2 dimer is bound on either side by a DncV monomer.

In terms of biological role, CD-NTase priming component of a CBASS antiviral system. CBASS (cyclic oligonucleotide-based antiphage signaling system) provides immunity against bacteriophages. The CD-NTase protein (DncV) synthesizes cyclic nucleotides in response to infection; these serve as specific second messenger signals. The signals activate a diverse range of effectors, leading to bacterial cell death and thus abortive phage infection. A type II-A(GA) CBASS system. Primes DncV; acts as a protein transferase, conjugating DncV, the CD-NTase, to unidentified target(s) in the cell via an E1-E2 ubiquitin transferase-like mechanism. During the conjugation reaction DncV is probably transiently attached to AMP. Protein conjugation requires ATP. Functionally, protects E.coli against phage infection. When the CBASS operon (capV-dncV-cap2-cap3) is introduced in E.coli MG1655 there is about 100-fold protection against phages P1 and T2. When the operon is introduced in E.coli MG1655 there is a more than 10(3) decrease in the efficiency of T2 plaque formation. Protects 100-fold against phage T5, offers no protection against T7. When the operon is introduced in E.coli MG1655 it protects against phages T2, T4, T5 and T6. Another paper shows the operon confers protection against phages P1, T2, T5 and T6 but not T4 or lambda. This is ATP-dependent ubiquitin transferase-like protein Cap2 from Vibrio cholerae serotype O1 (strain ATCC 39315 / El Tor Inaba N16961).